The chain runs to 168 residues: MSLTTYPHIYKKEQILKLKRLNKLSNDRKFFFSSVKGTLPGIISHCNNINEILGRCYLGICKLNSFFGLSKDPSDKLSVSKSPSVYTLPSKIFKEGGGNGDNTTTQTDILKNAQDQVILSKKIDELQTQVKELSSKIEPEPLTKEDIKKTYETLSRIESGLKGIIGIE.

This sequence belongs to the caulimoviridae ORF II family.

This protein is involved in virus transmission. In Carnation etched ring virus (CERV), this protein is Aphid transmission protein.